Reading from the N-terminus, the 278-residue chain is E3 ubiquitin-protein ligase MARCHF5 (278 aa).

An RING-CH-type zinc finger spans residues Leu6–Val75. Residues Cys14, Cys17, Cys33, Cys35, His43, Cys46, Cys65, and Cys68 each coordinate Zn(2+). The next 4 membrane-spanning stretches (helical) occupy residues Phe99–Val119, Pro139–Ile159, Ile209–Ser229, and Thr238–Gln258.

In terms of assembly, monomer and homodimer. Interacts with MFN1, MFN2, DNM1L and FIS1. In terms of processing, autoubiquitinated leading to degradation (short half-life).

The protein resides in the mitochondrion outer membrane. The catalysed reaction is S-ubiquitinyl-[E2 ubiquitin-conjugating enzyme]-L-cysteine + [acceptor protein]-L-lysine = [E2 ubiquitin-conjugating enzyme]-L-cysteine + N(6)-ubiquitinyl-[acceptor protein]-L-lysine.. It functions in the pathway protein modification; protein ubiquitination. Mitochondrial E3 ubiquitin-protein ligase that plays a crucial role in the control of mitochondrial morphology by acting as a positive regulator of mitochondrial fission and as an important regulator of immune response. Plays a crucial role in maintaining mitochondrial homeostasis by regulating the dynamics of mitochondria through the ubiquitination of key proteins involved in fission and fusion such as FIS1, DNM1L and MFN1. Acts as a critical determinant of mitotic apoptosis through both MCL1-dependent and -independent pathways. Turns off persistent immune signaling by degrading oligomeric complexes of retinoic acid-inducible gene I/DDX58 and mitochondrial antiviral-signaling protein/MAVS formed upon RNA virus infection. Promotes STING-mediated type-I interferon production via 'Lys-63'-linked ubiquitination of STING1 thereby preserving its activity and preventing the formation of inactive STING1 polymers. Plays also an essential role in the formation of PEX3-containing vesicles in the de novo biogenesis of peroxisomes from mitochondria. Acts as a regulator of NLRP3 inflammasome activation on the mitochondria by mediating the 'Lys-27'-linked polyubiquitination of NLRP3, positively regulating the NLRP3-NEK7 complex formation and NLRP3 oligomerization. In Bos taurus (Bovine), this protein is E3 ubiquitin-protein ligase MARCHF5 (MARCHF5).